A 335-amino-acid polypeptide reads, in one-letter code: Glucokinase (335 aa).

11–16 is an ATP binding site; sequence ADIGGT.

The protein belongs to the bacterial glucokinase family.

It localises to the cytoplasm. It carries out the reaction D-glucose + ATP = D-glucose 6-phosphate + ADP + H(+). This chain is Glucokinase, found in Stenotrophomonas maltophilia (strain R551-3).